Here is a 147-residue protein sequence, read N- to C-terminus: Ribonuclease P protein component (147 aa).

Residues 117 to 147 (TRPRGQSSHRTRASREATSAHTTAVGEQPTQ) are disordered.

The protein belongs to the RnpA family. In terms of assembly, consists of a catalytic RNA component (M1 or rnpB) and a protein subunit.

It catalyses the reaction Endonucleolytic cleavage of RNA, removing 5'-extranucleotides from tRNA precursor.. RNaseP catalyzes the removal of the 5'-leader sequence from pre-tRNA to produce the mature 5'-terminus. It can also cleave other RNA substrates such as 4.5S RNA. The protein component plays an auxiliary but essential role in vivo by binding to the 5'-leader sequence and broadening the substrate specificity of the ribozyme. The polypeptide is Ribonuclease P protein component (Thermobifida fusca (strain YX)).